The primary structure comprises 282 residues: tRNA uridine(34) hydroxylase (282 aa).

The Rhodanese domain occupies 128–222 (EGRPVVMLDT…YFEEVGGDHY (95 aa)). Cysteine 182 functions as the Cysteine persulfide intermediate in the catalytic mechanism.

It belongs to the TrhO family.

It carries out the reaction uridine(34) in tRNA + AH2 + O2 = 5-hydroxyuridine(34) in tRNA + A + H2O. Catalyzes oxygen-dependent 5-hydroxyuridine (ho5U) modification at position 34 in tRNAs. The protein is tRNA uridine(34) hydroxylase of Cupriavidus pinatubonensis (strain JMP 134 / LMG 1197) (Cupriavidus necator (strain JMP 134)).